Here is an 860-residue protein sequence, read N- to C-terminus: Leucine--tRNA ligase (860 aa).

A 'HIGH' region motif is present at residues 42–52 (PYPSGRLHMGH). A 'KMSKS' region motif is present at residues 619–623 (KMSKS). Lysine 622 serves as a coordination point for ATP.

This sequence belongs to the class-I aminoacyl-tRNA synthetase family.

Its subcellular location is the cytoplasm. The catalysed reaction is tRNA(Leu) + L-leucine + ATP = L-leucyl-tRNA(Leu) + AMP + diphosphate. The sequence is that of Leucine--tRNA ligase from Edwardsiella ictaluri (strain 93-146).